The following is a 323-amino-acid chain: Beta-ketoacyl-[acyl-carrier-protein] synthase III (323 aa).

Catalysis depends on residues C114 and H250. The segment at 251 to 255 (QANIR) is ACP-binding. Residue N280 is part of the active site.

Belongs to the thiolase-like superfamily. FabH family. In terms of assembly, homodimer.

It localises to the cytoplasm. It carries out the reaction malonyl-[ACP] + acetyl-CoA + H(+) = 3-oxobutanoyl-[ACP] + CO2 + CoA. It functions in the pathway lipid metabolism; fatty acid biosynthesis. Its function is as follows. Catalyzes the condensation reaction of fatty acid synthesis by the addition to an acyl acceptor of two carbons from malonyl-ACP. Catalyzes the first condensation reaction which initiates fatty acid synthesis and may therefore play a role in governing the total rate of fatty acid production. Possesses both acetoacetyl-ACP synthase and acetyl transacylase activities. Its substrate specificity determines the biosynthesis of branched-chain and/or straight-chain of fatty acids. The protein is Beta-ketoacyl-[acyl-carrier-protein] synthase III of Roseobacter denitrificans (strain ATCC 33942 / OCh 114) (Erythrobacter sp. (strain OCh 114)).